The chain runs to 246 residues: Probable transcriptional regulatory protein ESA_01378 (246 aa).

This sequence belongs to the TACO1 family.

Its subcellular location is the cytoplasm. The chain is Probable transcriptional regulatory protein ESA_01378 from Cronobacter sakazakii (strain ATCC BAA-894) (Enterobacter sakazakii).